A 261-amino-acid chain; its full sequence is 14-3-3-like protein B (261 aa).

The disordered stretch occupies residues 237 to 261 (DIPEDGEDSQKANGTAKFGGGDDAE).

It belongs to the 14-3-3 family.

This chain is 14-3-3-like protein B, found in Vicia faba (Broad bean).